Consider the following 398-residue polypeptide: Argininosuccinate lyase (398 aa).

This sequence belongs to the lyase 1 family. Argininosuccinate lyase subfamily.

It is found in the cytoplasm. The enzyme catalyses 2-(N(omega)-L-arginino)succinate = fumarate + L-arginine. The protein operates within amino-acid biosynthesis; L-arginine biosynthesis; L-arginine from L-ornithine and carbamoyl phosphate: step 3/3. This chain is Argininosuccinate lyase, found in Thermotoga neapolitana (strain ATCC 49049 / DSM 4359 / NBRC 107923 / NS-E).